A 97-amino-acid chain; its full sequence is Exodeoxyribonuclease 7 small subunit (97 aa).

Residues 1–22 (MAKTASPGDTAAGNGTEPLPDK) are disordered.

This sequence belongs to the XseB family. In terms of assembly, heterooligomer composed of large and small subunits.

Its subcellular location is the cytoplasm. It catalyses the reaction Exonucleolytic cleavage in either 5'- to 3'- or 3'- to 5'-direction to yield nucleoside 5'-phosphates.. Its function is as follows. Bidirectionally degrades single-stranded DNA into large acid-insoluble oligonucleotides, which are then degraded further into small acid-soluble oligonucleotides. The chain is Exodeoxyribonuclease 7 small subunit from Burkholderia vietnamiensis (strain G4 / LMG 22486) (Burkholderia cepacia (strain R1808)).